A 316-amino-acid chain; its full sequence is Ferrochelatase (316 aa).

Residues histidine 186 and glutamate 268 each contribute to the Fe cation site.

This sequence belongs to the ferrochelatase family.

Its subcellular location is the cytoplasm. It carries out the reaction heme b + 2 H(+) = protoporphyrin IX + Fe(2+). It participates in porphyrin-containing compound metabolism; protoheme biosynthesis; protoheme from protoporphyrin-IX: step 1/1. Catalyzes the ferrous insertion into protoporphyrin IX. In Deinococcus radiodurans (strain ATCC 13939 / DSM 20539 / JCM 16871 / CCUG 27074 / LMG 4051 / NBRC 15346 / NCIMB 9279 / VKM B-1422 / R1), this protein is Ferrochelatase.